The following is a 1102-amino-acid chain: Protein MMS22-like (1102 aa).

It belongs to the MMS22 family. MMS22L subfamily.

The protein resides in the nucleus. It is found in the chromosome. Functionally, involved in recombination-dependent repair of stalled or collapsed replication forks. The chain is Protein MMS22-like from Drosophila melanogaster (Fruit fly).